Reading from the N-terminus, the 377-residue chain is DNA replication and repair protein RecF (377 aa).

30 to 37 (GPNGQGKT) contributes to the ATP binding site.

It belongs to the RecF family.

The protein localises to the cytoplasm. Functionally, the RecF protein is involved in DNA metabolism; it is required for DNA replication and normal SOS inducibility. RecF binds preferentially to single-stranded, linear DNA. It also seems to bind ATP. The protein is DNA replication and repair protein RecF of Thermobifida fusca (strain YX).